The following is a 276-amino-acid chain: Ribosomal RNA small subunit methyltransferase A (276 aa).

S-adenosyl-L-methionine is bound by residues asparagine 27, leucine 29, glycine 54, glutamate 75, aspartate 101, and asparagine 122.

This sequence belongs to the class I-like SAM-binding methyltransferase superfamily. rRNA adenine N(6)-methyltransferase family. RsmA subfamily.

Its subcellular location is the cytoplasm. The enzyme catalyses adenosine(1518)/adenosine(1519) in 16S rRNA + 4 S-adenosyl-L-methionine = N(6)-dimethyladenosine(1518)/N(6)-dimethyladenosine(1519) in 16S rRNA + 4 S-adenosyl-L-homocysteine + 4 H(+). Functionally, specifically dimethylates two adjacent adenosines (A1518 and A1519) in the loop of a conserved hairpin near the 3'-end of 16S rRNA in the 30S particle. May play a critical role in biogenesis of 30S subunits. In Brucella abortus (strain S19), this protein is Ribosomal RNA small subunit methyltransferase A.